The following is a 227-amino-acid chain: Ribonuclease 3 (227 aa).

One can recognise an RNase III domain in the interval 4–133; it reads FETLEKLLSY…LIAAIYLDSN (130 aa). Glu46 lines the Mg(2+) pocket. Asp50 is a catalytic residue. Residues Asn119 and Glu122 each coordinate Mg(2+). The active site involves Glu122. The DRBM domain maps to 158–226; it reads DPKTALQEWA…ARSLLHRLKN (69 aa).

Belongs to the ribonuclease III family. As to quaternary structure, homodimer. Mg(2+) serves as cofactor.

It is found in the cytoplasm. The catalysed reaction is Endonucleolytic cleavage to 5'-phosphomonoester.. In terms of biological role, digests double-stranded RNA. Involved in the processing of primary rRNA transcript to yield the immediate precursors to the large and small rRNAs (23S and 16S). Processes some mRNAs, and tRNAs when they are encoded in the rRNA operon. Processes pre-crRNA and tracrRNA of type II CRISPR loci if present in the organism. The protein is Ribonuclease 3 of Rickettsia massiliae (strain Mtu5).